The primary structure comprises 622 residues: DNA mismatch repair protein MutL (622 aa).

The protein belongs to the DNA mismatch repair MutL/HexB family.

In terms of biological role, this protein is involved in the repair of mismatches in DNA. It is required for dam-dependent methyl-directed DNA mismatch repair. May act as a 'molecular matchmaker', a protein that promotes the formation of a stable complex between two or more DNA-binding proteins in an ATP-dependent manner without itself being part of a final effector complex. This Actinobacillus pleuropneumoniae serotype 3 (strain JL03) protein is DNA mismatch repair protein MutL.